The primary structure comprises 345 residues: S-adenosylmethionine:tRNA ribosyltransferase-isomerase (345 aa).

The protein belongs to the QueA family. As to quaternary structure, monomer.

Its subcellular location is the cytoplasm. The enzyme catalyses 7-aminomethyl-7-carbaguanosine(34) in tRNA + S-adenosyl-L-methionine = epoxyqueuosine(34) in tRNA + adenine + L-methionine + 2 H(+). The protein operates within tRNA modification; tRNA-queuosine biosynthesis. In terms of biological role, transfers and isomerizes the ribose moiety from AdoMet to the 7-aminomethyl group of 7-deazaguanine (preQ1-tRNA) to give epoxyqueuosine (oQ-tRNA). In Shewanella sp. (strain MR-7), this protein is S-adenosylmethionine:tRNA ribosyltransferase-isomerase.